A 281-amino-acid polypeptide reads, in one-letter code: NADH--cytochrome b5 reductase 1 (281 aa).

A helical transmembrane segment spans residues 13–33 (ILLGVFVAFVAVGAGAAYFLT). An AKR2A-binding sequence (ABS) required for mitochondrion outer membrane targeting motif is present at residues 34-40 (SSKKRRV). An FAD-binding FR-type domain is found at 45-149 (ENFKEFKLVK…KGPKGRFKYQ (105 aa)). Residues 129–144 (REMR…GPKG) and 155–187 (AFGM…KVHL) each bind FAD. Position 166 is a phosphothreonine (Thr166).

The protein belongs to the flavoprotein pyridine nucleotide cytochrome reductase family. As to quaternary structure, monomer. Interacts with AKR2A. FAD is required as a cofactor. In terms of tissue distribution, expressed in roots, stems, flowers and siliques. Detected in leaves.

It is found in the mitochondrion outer membrane. It carries out the reaction 2 Fe(III)-[cytochrome b5] + NADH = 2 Fe(II)-[cytochrome b5] + NAD(+) + H(+). In terms of biological role, reductase transferring electrons from NADH to cytochrome b5. Required for the NADH-dependent electron transfer involved in the desaturation and hydroxylation of fatty acids and in the desaturation of sterol precursors. No activity with NADPH as electron donor. The sequence is that of NADH--cytochrome b5 reductase 1 from Arabidopsis thaliana (Mouse-ear cress).